Consider the following 264-residue polypeptide: ATP synthase subunit a (264 aa).

Helical transmembrane passes span 29 to 49, 90 to 110, 134 to 154, 177 to 197, 208 to 228, and 235 to 255; these read TWHI…LWIF, IAPL…MDMI, DVNI…YYSI, IPVN…SLAL, LIFI…SLGV, and LIFH…LTIV.

The protein belongs to the ATPase A chain family. As to quaternary structure, F-type ATPases have 2 components, CF(1) - the catalytic core - and CF(0) - the membrane proton channel. CF(1) has five subunits: alpha(3), beta(3), gamma(1), delta(1), epsilon(1). CF(0) has three main subunits: a(1), b(2) and c(9-12). The alpha and beta chains form an alternating ring which encloses part of the gamma chain. CF(1) is attached to CF(0) by a central stalk formed by the gamma and epsilon chains, while a peripheral stalk is formed by the delta and b chains.

Its subcellular location is the cell inner membrane. In terms of biological role, key component of the proton channel; it plays a direct role in the translocation of protons across the membrane. The polypeptide is ATP synthase subunit a (Shewanella oneidensis (strain ATCC 700550 / JCM 31522 / CIP 106686 / LMG 19005 / NCIMB 14063 / MR-1)).